A 174-amino-acid polypeptide reads, in one-letter code: Pediocin PA-1 biosynthesis protein PedC (174 aa).

In terms of biological role, probably involved in pediocin PA-1 biosynthesis. This Pediococcus acidilactici protein is Pediocin PA-1 biosynthesis protein PedC (pedC).